The chain runs to 374 residues: 5-pentadecatrienyl resorcinol O-methyltransferase (374 aa).

D239, D261, M262, and K275 together coordinate S-adenosyl-L-methionine. Catalysis depends on H279, which acts as the Proton acceptor.

This sequence belongs to the class I-like SAM-binding methyltransferase superfamily. Cation-independent O-methyltransferase family. COMT subfamily. In terms of assembly, homodimer. Expressed predominantly in root hairs.

It carries out the reaction (8Z,11Z)-5-(pentadeca-8,11,14-trien-1-yl)resorcinol + S-adenosyl-L-methionine = (8Z,11Z)-5-(pentadeca- 8,11,14-trien-1-yl)resorcinol-3-methyl ether + S-adenosyl-L-homocysteine + H(+). Its function is as follows. O-methyltransferase involved in the biosynthetic pathway of the phytotoxin sorgoleone, a potent broad-spectrum inhibitor active against many agronomically important monocot and dicot weed species. Substrate specificity for alkylresorcinols. Strong preference for a five carbons alkyl side chain. This Sorghum bicolor (Sorghum) protein is 5-pentadecatrienyl resorcinol O-methyltransferase (OMT3).